We begin with the raw amino-acid sequence, 173 residues long: Protein-export protein SecB (173 aa).

Belongs to the SecB family. Homotetramer, a dimer of dimers. One homotetramer interacts with 1 SecA dimer.

Its subcellular location is the cytoplasm. Functionally, one of the proteins required for the normal export of preproteins out of the cell cytoplasm. It is a molecular chaperone that binds to a subset of precursor proteins, maintaining them in a translocation-competent state. It also specifically binds to its receptor SecA. This Novosphingobium aromaticivorans (strain ATCC 700278 / DSM 12444 / CCUG 56034 / CIP 105152 / NBRC 16084 / F199) protein is Protein-export protein SecB.